Reading from the N-terminus, the 388-residue chain is Leucine aminopeptidase 1 (388 aa).

The first 19 residues, 1 to 19 (MRVLAAIALGATGLRGALA), serve as a signal peptide directing secretion. The propeptide occupies 20–88 (AVVPQEVLGT…YPTLNSASYV (69 aa)). 2 N-linked (GlcNAc...) asparagine glycosylation sites follow: asparagine 106 and asparagine 180. Positions 188 and 207 each coordinate Zn(2+). Asparagine 232 is a glycosylation site (N-linked (GlcNAc...) asparagine). Residues glutamate 246 and aspartate 273 each contribute to the Zn(2+) site. Cysteine 322 and cysteine 326 are oxidised to a cystine. Histidine 355 provides a ligand contact to Zn(2+).

Belongs to the peptidase M28 family. M28E subfamily. As to quaternary structure, monomer. It depends on Zn(2+) as a cofactor.

The protein resides in the secreted. In terms of biological role, extracellular aminopeptidase that allows assimilation of proteinaceous substrates. This Aspergillus clavatus (strain ATCC 1007 / CBS 513.65 / DSM 816 / NCTC 3887 / NRRL 1 / QM 1276 / 107) protein is Leucine aminopeptidase 1 (lap1).